The chain runs to 469 residues: Interstitial collagenase (469 aa).

Residues 1–19 form the signal peptide; it reads MHSFPPLLLLLFWGVVSHS. Residues 20–99 constitute a propeptide, activation peptide; the sequence is FPATLETQEQ…PRCGVPDVAQ (80 aa). At Ser57 the chain carries Phosphoserine. The Cysteine switch signature appears at 90–97; that stretch reads PRCGVPDV. Cys92 is a Zn(2+) binding site. The segment at 98-276 is metalloprotease; that stretch reads AQFVLTEGNP…VQPIGPQTPK (179 aa). Asn120 carries an N-linked (GlcNAc...) asparagine glycan. Ca(2+) is bound by residues Asp124 and Asp158. His168 and Asp170 together coordinate Zn(2+). Residues Asp175, Gly176, Gly178, and Asn180 each contribute to the Ca(2+) site. His183 serves as a coordination point for Zn(2+). 3 residues coordinate Ca(2+): Gly190, Gly192, and Asp194. His196 is a binding site for Zn(2+). Positions 198, 199, and 201 each coordinate Ca(2+). His218 provides a ligand contact to Zn(2+). Glu219 is a catalytic residue. Zn(2+) contacts are provided by His222 and His228. At Thr274 the chain carries Phosphothreonine. 4 Hemopexin repeats span residues 275 to 324, 325 to 371, 374 to 422, and 423 to 466; these read PKAC…WPQL, PNGL…FGFP, VKHI…FPGI, and GHKV…WFNC. Cys278 and Cys466 are joined by a disulfide. Residues Asp285 and Glu329 each coordinate Ca(2+). Tyr360 bears the Phosphotyrosine; by PKDCC mark. Ca(2+) contacts are provided by Asp378 and Asp427.

It belongs to the peptidase M10A family. (Microbial infection) Interacts with HIV-1 Tat. Ca(2+) serves as cofactor. The cofactor is Zn(2+). Post-translationally, undergoes autolytic cleavage to two major forms (22 kDa and 27 kDa). A minor form (25 kDa) is the glycosylated form of the 22 kDa form. The 27 kDa form has no activity while the 22/25 kDa form can act as activator for collagenase. In terms of processing, tyrosine phosphorylated in platelets by PKDCC/VLK.

The protein resides in the secreted. The protein localises to the extracellular space. Its subcellular location is the extracellular matrix. The catalysed reaction is Cleavage of the triple helix of collagen at about three-quarters of the length of the molecule from the N-terminus, at 775-Gly-|-Ile-776 in the alpha1(I) chain. Cleaves synthetic substrates and alpha-macroglobulins at bonds where P1' is a hydrophobic residue.. Its activity is regulated as follows. Can be activated without removal of the activation peptide. Its function is as follows. Cleaves collagens of types I, II, and III at one site in the helical domain. Also cleaves collagens of types VII and X. In case of HIV infection, interacts and cleaves the secreted viral Tat protein, leading to a decrease in neuronal Tat's mediated neurotoxicity. The sequence is that of Interstitial collagenase (MMP1) from Homo sapiens (Human).